The primary structure comprises 86 residues: Toxin Aam2 (86 aa).

An N-terminal signal peptide occupies residues 1–20; the sequence is MNYLITISLALLLMTGVASG. In terms of domain architecture, LCN-type CS-alpha/beta spans 22–84; the sequence is RDGYIADAGN…VPIKVPGKCN (63 aa). Cystine bridges form between cysteine 32–cysteine 83, cysteine 36–cysteine 56, cysteine 42–cysteine 66, and cysteine 46–cysteine 68. Asparagine 84 carries the asparagine amide modification.

This sequence belongs to the long (4 C-C) scorpion toxin superfamily. Sodium channel inhibitor family. Alpha subfamily. As to expression, expressed by the venom gland.

It is found in the secreted. Functionally, alpha toxins bind voltage-independently at site-3 of sodium channels (Nav) and inhibit the inactivation of the activated channels, thereby blocking neuronal transmission. This Androctonus amoreuxi (African fattail scorpion) protein is Toxin Aam2.